A 384-amino-acid chain; its full sequence is Probable fructokinase-6, chloroplastic (384 aa).

The transit peptide at 1–46 directs the protein to the chloroplast; the sequence is MALQATTTTFCFSGPTFRSTPHSLTSKRPISIKATTSSPSRLSNSR. The tract at residues 34-61 is disordered; the sequence is ATTSSPSRLSNSRSNLKGRALSSDGSTQ. A compositionally biased stretch (low complexity) spans 35-48; sequence TTSSPSRLSNSRSN.

Belongs to the carbohydrate kinase PfkB family.

The protein localises to the plastid. It localises to the chloroplast. It carries out the reaction D-fructose + ATP = D-fructose 6-phosphate + ADP + H(+). It participates in glycan biosynthesis; starch biosynthesis. In terms of biological role, may play an important role in maintaining the flux of carbon towards starch formation. The sequence is that of Probable fructokinase-6, chloroplastic from Arabidopsis thaliana (Mouse-ear cress).